The sequence spans 254 residues: Imidazole glycerol phosphate synthase subunit HisF (254 aa).

Residues aspartate 11 and aspartate 130 contribute to the active site.

The protein belongs to the HisA/HisF family. Heterodimer of HisH and HisF.

It is found in the cytoplasm. It carries out the reaction 5-[(5-phospho-1-deoxy-D-ribulos-1-ylimino)methylamino]-1-(5-phospho-beta-D-ribosyl)imidazole-4-carboxamide + L-glutamine = D-erythro-1-(imidazol-4-yl)glycerol 3-phosphate + 5-amino-1-(5-phospho-beta-D-ribosyl)imidazole-4-carboxamide + L-glutamate + H(+). It participates in amino-acid biosynthesis; L-histidine biosynthesis; L-histidine from 5-phospho-alpha-D-ribose 1-diphosphate: step 5/9. Functionally, IGPS catalyzes the conversion of PRFAR and glutamine to IGP, AICAR and glutamate. The HisF subunit catalyzes the cyclization activity that produces IGP and AICAR from PRFAR using the ammonia provided by the HisH subunit. The polypeptide is Imidazole glycerol phosphate synthase subunit HisF (Staphylococcus carnosus (strain TM300)).